A 123-amino-acid chain; its full sequence is MPRSSRQQAGREAEAFALQFLQRQGLHLIEQNWLCKRGELDLVMLDGDTVVFVEVRYRRHSGWGGATESVDFRKQAKLVTAAQLFLQQATDWASHPCRFDVIAIEGQPGNAAPLNWIKSAFDS.

It belongs to the UPF0102 family.

In Pseudomonas savastanoi pv. phaseolicola (strain 1448A / Race 6) (Pseudomonas syringae pv. phaseolicola (strain 1448A / Race 6)), this protein is UPF0102 protein PSPPH_4120.